The following is a 328-amino-acid chain: DNA-directed RNA polymerase subunit alpha (328 aa).

Positions 1–231 are alpha N-terminal domain (alpha-NTD); sequence MIYQMQMPER…EHVSLFANFS (231 aa). Residues 252-328 are alpha C-terminal domain (alpha-CTD); sequence MRKLLQTRIE…MDITKYQMKS (77 aa).

It belongs to the RNA polymerase alpha chain family. In terms of assembly, homodimer. The RNAP catalytic core consists of 2 alpha, 1 beta, 1 beta' and 1 omega subunit. When a sigma factor is associated with the core the holoenzyme is formed, which can initiate transcription.

The catalysed reaction is RNA(n) + a ribonucleoside 5'-triphosphate = RNA(n+1) + diphosphate. Functionally, DNA-dependent RNA polymerase catalyzes the transcription of DNA into RNA using the four ribonucleoside triphosphates as substrates. The protein is DNA-directed RNA polymerase subunit alpha of Prosthecochloris aestuarii (strain DSM 271 / SK 413).